A 253-amino-acid polypeptide reads, in one-letter code: 2-C-methyl-D-erythritol 4-phosphate cytidylyltransferase (253 aa).

This sequence belongs to the IspD/TarI cytidylyltransferase family. IspD subfamily.

It carries out the reaction 2-C-methyl-D-erythritol 4-phosphate + CTP + H(+) = 4-CDP-2-C-methyl-D-erythritol + diphosphate. Its pathway is isoprenoid biosynthesis; isopentenyl diphosphate biosynthesis via DXP pathway; isopentenyl diphosphate from 1-deoxy-D-xylulose 5-phosphate: step 2/6. Functionally, catalyzes the formation of 4-diphosphocytidyl-2-C-methyl-D-erythritol from CTP and 2-C-methyl-D-erythritol 4-phosphate (MEP). The protein is 2-C-methyl-D-erythritol 4-phosphate cytidylyltransferase of Chlorobium chlorochromatii (strain CaD3).